Here is a 213-residue protein sequence, read N- to C-terminus: Phosphoribosyl-dephospho-CoA transferase (213 aa).

Residues Asp-135 and Asp-137 contribute to the active site.

Belongs to the MdcG family.

It carries out the reaction apo-[malonate decarboxylase ACP] + 2'-(5''-triphospho-alpha-D-ribosyl)-3'-dephospho-CoA = holo-[malonate decarboxylase ACP] + diphosphate. Functionally, transfers 2'-(5-triphosphoribosyl)-3'-dephosphocoenzyme-A to the apo-[acyl-carrier-protein] of the malonate decarboxylase to yield holo-[acyl-carrier-protein]. The chain is Phosphoribosyl-dephospho-CoA transferase from Xanthomonas campestris pv. campestris (strain ATCC 33913 / DSM 3586 / NCPPB 528 / LMG 568 / P 25).